Reading from the N-terminus, the 670-residue chain is Leucine-rich repeat-containing protein 45 (670 aa).

LRR repeat units lie at residues Thr-58 to Arg-80, Val-87 to Gly-107, Ser-115 to Phe-136, Ala-145 to Leu-166, Thr-173 to Asn-194, and Thr-201 to Ile-212. Positions Arg-252–Gln-645 form a coiled coil. A Phosphoserine; by NEK2 modification is found at Ser-661.

In terms of assembly, homomer. Interacts with CROCC/rootletin and CEP250. Interacts with CEP44. Interacts with CCDC102B (via N-terminus). Post-translationally, phosphorylated by NEK2 during misosis, phosphorylation reduces centrosomal localization which subsequently leads to centrosome separation.

It is found in the cytoplasm. Its subcellular location is the cytoskeleton. It localises to the microtubule organizing center. The protein localises to the centrosome. Its function is as follows. Component of the proteinaceous fiber-like linker between two centrioles, required for centrosome cohesion. The chain is Leucine-rich repeat-containing protein 45 (LRRC45) from Homo sapiens (Human).